The chain runs to 346 residues: Homeobox protein ceh-22 (346 aa).

Disordered stretches follow at residues 1–68 (MFNV…QSAL) and 135–190 (LPDQ…RKKR). The segment covering 9-24 (AATPSIASVSSVASPS) has biased composition (low complexity). Residues 25–44 (EQHGLSTSVGVGVNDTTSRT) show a composition bias toward polar residues. The segment covering 49–67 (AASSASSASAAPQQQSQSA) has biased composition (low complexity). Over residues 147-156 (LDNSNTSNGN) the composition is skewed to polar residues. Positions 166-182 (EDEDEILEDEENDEEDD) are enriched in acidic residues. Positions 189–248 (KRKRRVLFTKAQTYELERRFRSQKYLSAPEREALAMQIRLTPTQVKIWFQNHRYKTKKSH) form a DNA-binding region, homeobox.

It belongs to the NK-2 homeobox family.

It localises to the nucleus. In terms of biological role, involved in combinatorial activation of gene expression in pharyngeal muscle. Specifically binds a site necessary for activity of the B subelement of myo-2 enhancer. Regulates distal tip cell fate. This is Homeobox protein ceh-22 (ceh-22) from Caenorhabditis elegans.